Here is a 288-residue protein sequence, read N- to C-terminus: ATP synthase gamma chain (288 aa).

The protein belongs to the ATPase gamma chain family. As to quaternary structure, F-type ATPases have 2 components, CF(1) - the catalytic core - and CF(0) - the membrane proton channel. CF(1) has five subunits: alpha(3), beta(3), gamma(1), delta(1), epsilon(1). CF(0) has three main subunits: a, b and c.

The protein localises to the cell inner membrane. Produces ATP from ADP in the presence of a proton gradient across the membrane. The gamma chain is believed to be important in regulating ATPase activity and the flow of protons through the CF(0) complex. The polypeptide is ATP synthase gamma chain (Rickettsia prowazekii (strain Madrid E)).